The primary structure comprises 272 residues: 4-hydroxy-tetrahydrodipicolinate reductase (272 aa).

12 to 17 (GALGKM) serves as a coordination point for NAD(+). Residue K39 participates in NADP(+) binding. NAD(+) contacts are provided by residues 102 to 104 (GTT) and 126 to 129 (SSNY). Catalysis depends on H159, which acts as the Proton donor/acceptor. H160 serves as a coordination point for (S)-2,3,4,5-tetrahydrodipicolinate. The Proton donor role is filled by K163. Residue 169-170 (GT) participates in (S)-2,3,4,5-tetrahydrodipicolinate binding.

This sequence belongs to the DapB family. As to quaternary structure, homotetramer.

It localises to the cytoplasm. It carries out the reaction (S)-2,3,4,5-tetrahydrodipicolinate + NAD(+) + H2O = (2S,4S)-4-hydroxy-2,3,4,5-tetrahydrodipicolinate + NADH + H(+). The catalysed reaction is (S)-2,3,4,5-tetrahydrodipicolinate + NADP(+) + H2O = (2S,4S)-4-hydroxy-2,3,4,5-tetrahydrodipicolinate + NADPH + H(+). It participates in amino-acid biosynthesis; L-lysine biosynthesis via DAP pathway; (S)-tetrahydrodipicolinate from L-aspartate: step 4/4. Functionally, catalyzes the conversion of 4-hydroxy-tetrahydrodipicolinate (HTPA) to tetrahydrodipicolinate. This Buchnera aphidicola subsp. Baizongia pistaciae (strain Bp) protein is 4-hydroxy-tetrahydrodipicolinate reductase.